Consider the following 118-residue polypeptide: Large ribosomal subunit protein bL19 (118 aa).

Belongs to the bacterial ribosomal protein bL19 family.

This protein is located at the 30S-50S ribosomal subunit interface and may play a role in the structure and function of the aminoacyl-tRNA binding site. The polypeptide is Large ribosomal subunit protein bL19 (Campylobacter concisus (strain 13826)).